A 162-amino-acid polypeptide reads, in one-letter code: Cyclic pyranopterin monophosphate synthase (162 aa).

Residues Met-75 to His-77 and Met-115 to Glu-116 contribute to the substrate site. Asp-130 is a catalytic residue.

This sequence belongs to the MoaC family. As to quaternary structure, homohexamer; trimer of dimers.

The enzyme catalyses (8S)-3',8-cyclo-7,8-dihydroguanosine 5'-triphosphate = cyclic pyranopterin phosphate + diphosphate. It participates in cofactor biosynthesis; molybdopterin biosynthesis. Catalyzes the conversion of (8S)-3',8-cyclo-7,8-dihydroguanosine 5'-triphosphate to cyclic pyranopterin monophosphate (cPMP). This chain is Cyclic pyranopterin monophosphate synthase, found in Geobacillus kaustophilus (strain HTA426).